The chain runs to 231 residues: 2-C-methyl-D-erythritol 4-phosphate cytidylyltransferase (231 aa).

This sequence belongs to the IspD/TarI cytidylyltransferase family. IspD subfamily.

The catalysed reaction is 2-C-methyl-D-erythritol 4-phosphate + CTP + H(+) = 4-CDP-2-C-methyl-D-erythritol + diphosphate. It functions in the pathway isoprenoid biosynthesis; isopentenyl diphosphate biosynthesis via DXP pathway; isopentenyl diphosphate from 1-deoxy-D-xylulose 5-phosphate: step 2/6. In terms of biological role, catalyzes the formation of 4-diphosphocytidyl-2-C-methyl-D-erythritol from CTP and 2-C-methyl-D-erythritol 4-phosphate (MEP). This is 2-C-methyl-D-erythritol 4-phosphate cytidylyltransferase from Clostridium kluyveri (strain NBRC 12016).